Here is an 80-residue protein sequence, read N- to C-terminus: MKRILIAPVRFYQRFISPVFPPSCRFELTCSNYMIQAIEKHGFKGVLMGLARILRCHPWSKTGKDPVPDRFSLKRNQEGE.

Residues 60 to 80 (SKTGKDPVPDRFSLKRNQEGE) are disordered. The span at 62 to 80 (TGKDPVPDRFSLKRNQEGE) shows a compositional bias: basic and acidic residues.

It belongs to the UPF0161 family.

Its subcellular location is the cell membrane. Its function is as follows. Could be involved in insertion of integral membrane proteins into the membrane. This chain is Putative membrane protein insertion efficiency factor, found in Streptococcus pneumoniae serotype 4 (strain ATCC BAA-334 / TIGR4).